The chain runs to 292 residues: 4-hydroxy-tetrahydrodipicolinate synthase (292 aa).

Residue T45 coordinates pyruvate. The active-site Proton donor/acceptor is the Y133. Catalysis depends on K162, which acts as the Schiff-base intermediate with substrate. Pyruvate is bound at residue I204.

Belongs to the DapA family. Homotetramer; dimer of dimers.

It localises to the cytoplasm. The catalysed reaction is L-aspartate 4-semialdehyde + pyruvate = (2S,4S)-4-hydroxy-2,3,4,5-tetrahydrodipicolinate + H2O + H(+). The protein operates within amino-acid biosynthesis; L-lysine biosynthesis via DAP pathway; (S)-tetrahydrodipicolinate from L-aspartate: step 3/4. In terms of biological role, catalyzes the condensation of (S)-aspartate-beta-semialdehyde [(S)-ASA] and pyruvate to 4-hydroxy-tetrahydrodipicolinate (HTPA). This is 4-hydroxy-tetrahydrodipicolinate synthase from Nitratidesulfovibrio vulgaris (strain ATCC 29579 / DSM 644 / CCUG 34227 / NCIMB 8303 / VKM B-1760 / Hildenborough) (Desulfovibrio vulgaris).